A 559-amino-acid chain; its full sequence is Putative helicase 22 (559 aa).

In terms of domain architecture, Helicase ATP-binding spans 186–347 (VSDVNVIGNG…EIMGLLGKIS (162 aa)). 199-206 (APTGSGKS) is a binding site for ATP. Residues 300–303 (DEAH) carry the DEAH box motif. Positions 410–552 (TNKQIISKIK…KMNFIENEYN (143 aa)) constitute a Helicase C-terminal domain.

In Sulfolobus islandicus filamentous virus (isolate Iceland/Hveragerdi) (SIFV), this protein is Putative helicase 22 (SIFV0022).